Consider the following 296-residue polypeptide: tRNA (guanine-N(7)-)-methyltransferase (296 aa).

The tract at residues 1 to 26 is disordered; that stretch reads MSKRTREESEMEAGPSTASPGVSVSP. S-adenosyl-L-methionine-binding positions include glycine 101, 124 to 125, 168 to 169, and leucine 188; these read EI and NS. Aspartate 191 is an active-site residue. 266 to 268 is a binding site for S-adenosyl-L-methionine; that stretch reads TEE.

This sequence belongs to the class I-like SAM-binding methyltransferase superfamily. TrmB family. As to quaternary structure, forms a complex with TRM82.

The protein localises to the nucleus. The catalysed reaction is guanosine(46) in tRNA + S-adenosyl-L-methionine = N(7)-methylguanosine(46) in tRNA + S-adenosyl-L-homocysteine. It participates in tRNA modification; N(7)-methylguanine-tRNA biosynthesis. Functionally, catalyzes the formation of N(7)-methylguanine at position 46 (m7G46) in tRNA. The chain is tRNA (guanine-N(7)-)-methyltransferase from Cryptococcus neoformans var. neoformans serotype D (strain JEC21 / ATCC MYA-565) (Filobasidiella neoformans).